A 128-amino-acid chain; its full sequence is MRHYEIVLLVHPDQSDQVVGMVERYISQIKEADGQIHRLEDWGRRQLAYPINKIHKAHYILMNVECGQTTLDELEELFRYNDAIIRNIIIRREHAITEESLLAKSAEEKRARKAQREEAQQIQDSAEA.

The protein belongs to the bacterial ribosomal protein bS6 family.

Binds together with bS18 to 16S ribosomal RNA. This chain is Small ribosomal subunit protein bS6, found in Acinetobacter baylyi (strain ATCC 33305 / BD413 / ADP1).